A 114-amino-acid polypeptide reads, in one-letter code: MARGGFPNFGGGGNMNNLMKQAQKFQKQMEDMQSELENKEFSATAGGEAITVVVNGKKQIVSIKIKPEVVDPEDVEMLEDLVLTACNQALKSAEDQTASEMKKLTGGLNIPGMF.

The protein belongs to the YbaB/EbfC family. In terms of assembly, homodimer.

It is found in the cytoplasm. The protein resides in the nucleoid. In terms of biological role, binds to DNA and alters its conformation. May be involved in regulation of gene expression, nucleoid organization and DNA protection. The chain is Nucleoid-associated protein CKL_3826 from Clostridium kluyveri (strain ATCC 8527 / DSM 555 / NBRC 12016 / NCIMB 10680 / K1).